We begin with the raw amino-acid sequence, 228 residues long: Sodium channel regulatory subunit beta-4 (228 aa).

The first 30 residues, 1–30, serve as a signal peptide directing secretion; it reads MPGAGDGGKAPARWLGTGLLGLFLLPVTLS. The region spanning 31 to 148 is the Ig-like C2-type domain; the sequence is LEVSVGKATD…NNLQHHATIF (118 aa). At 31–162 the chain is on the extracellular side; it reads LEVSVGKATD…DRLEEVDNTV (132 aa). N-linked (GlcNAc...) asparagine glycans are attached at residues N45, N71, and N113. C53 and C131 form a disulfide bridge. A helical transmembrane segment spans residues 163–183; sequence TLIILAVVGGVIGLLILILLI. Residues 184-228 are Cytoplasmic-facing; sequence KKLIIFILKKTREKKKECLVSSSGNDNTENGLPGSKAEEKPPSKV. The interval 200 to 228 is disordered; the sequence is ECLVSSSGNDNTENGLPGSKAEEKPPSKV. A compositionally biased stretch (polar residues) spans 203-213; the sequence is VSSSGNDNTEN. A compositionally biased stretch (basic and acidic residues) spans 219–228; that stretch reads KAEEKPPSKV.

Belongs to the sodium channel auxiliary subunit SCN4B (TC 8.A.17) family. A voltage-gated sodium (Nav) channel consists of an ion-conducting pore-forming alpha subunit functional on its own that is regulated by one or more beta subunits. The beta subunit SCN4B is disulfide-linked to the pore-forming alpha subunit. Interacts with SCN1A; regulatory subunit of SCN1A/Nav1.1. Interacts with SCN2A; regulatory subunit of SCN2A/Nav1.2. Contains an interchain disulfide bond with SCN2A. Post-translationally, N-glycosylated. As to expression, expressed at a high level in dorsal root ganglia, at a lower level in brain, spinal cord, skeletal muscle and heart. Expressed in the atrium.

The protein localises to the cell membrane. Functionally, regulatory subunit of multiple voltage-gated sodium (Nav) channels directly mediating the depolarization of excitable membranes. Navs, also called VGSCs (voltage-gated sodium channels) or VDSCs (voltage-dependent sodium channels), operate by switching between closed and open conformations depending on the voltage difference across the membrane. In the open conformation they allow Na(+) ions to selectively pass through the pore, along their electrochemical gradient. The influx of Na+ ions provokes membrane depolarization, initiating the propagation of electrical signals throughout cells and tissues. The accessory beta subunits participate in localization and functional modulation of the Nav channels. Modulates the activity of SCN1A/Nav1.1. Modulates the activity of SCN2A/Nav1.2. This is Sodium channel regulatory subunit beta-4 from Homo sapiens (Human).